Here is a 2176-residue protein sequence, read N- to C-terminus: Nipped-B-like protein scc-2 (2176 aa).

Polar residues predominate over residues 1–25 (MDPNNLQNSLNGTGNPNFQPVQTNA). 7 disordered regions span residues 1-27 (MDPN…NAGG), 150-170 (PIPQ…QIQS), 464-483 (SEAT…DEEG), 495-514 (MMSV…NQRK), 523-551 (YDSL…DDED), 585-615 (QHFF…IESR), and 669-708 (DSLD…EMDE). A compositionally biased stretch (low complexity) spans 464–473 (SEATQSSSVT). Composition is skewed to basic and acidic residues over residues 597–615 (EDRI…IESR) and 685–695 (SGGDHHHKGDE). The span at 696 to 708 (NSDESDEEEEMDE) shows a compositional bias: acidic residues. HEAT repeat units follow at residues 1280–1312 (DTYL…IIEA), 1320–1351 (EDVQ…FVLY), 1353–1388 (EEYV…ICEK), 1393–1426 (EMIP…LWFQ), 1692–1723 (EKVF…FCAQ), 1803–1834 (QKYW…TLNQ), and 1840–1871 (GASI…IDSK). The segment at 2149-2176 (ITAANDDYDEEEDGGEDSRGPIMEQMEH) is disordered. The segment covering 2154–2163 (DDYDEEEDGG) has biased composition (acidic residues).

The protein belongs to the SCC2/Nipped-B family. As to quaternary structure, may heterodimerize with mau-2/SCC4 to form the cohesin loading complex.

Its subcellular location is the nucleus. The protein resides in the chromosome. In terms of biological role, plays an important role in the loading of the cohesin complex on to meiotic chromosomes. Forms a heterodimeric complex (also known as cohesin loading complex) with mau-2/SCC4 which mediates the loading of the cohesin complex onto chromatin. Plays an essential role in cell division during embryonic development. Promotes normal chromosome organization during meiosis. Required for the assembly of the synaptonemal complex between homologous chromosomes to promote sister chromatid cohesion during meiosis. Required for chromosome segregation during mitosis and meiosis. Plays a role in DNA double-strand break (DSB) repair during meiotic recombination and promotes the assembly of the 9-1-1 cell-cycle checkpoint response complex which is required for inducing apoptosis in response to DNA damage, at DNA damage sites. The chain is Nipped-B-like protein scc-2 from Caenorhabditis elegans.